A 237-amino-acid polypeptide reads, in one-letter code: Putative N-acetylmannosamine-6-phosphate 2-epimerase (237 aa).

This sequence belongs to the NanE family.

It catalyses the reaction an N-acyl-D-glucosamine 6-phosphate = an N-acyl-D-mannosamine 6-phosphate. It functions in the pathway amino-sugar metabolism; N-acetylneuraminate degradation; D-fructose 6-phosphate from N-acetylneuraminate: step 3/5. Its function is as follows. Converts N-acetylmannosamine-6-phosphate (ManNAc-6-P) to N-acetylglucosamine-6-phosphate (GlcNAc-6-P). The protein is Putative N-acetylmannosamine-6-phosphate 2-epimerase of Caldanaerobacter subterraneus subsp. tengcongensis (strain DSM 15242 / JCM 11007 / NBRC 100824 / MB4) (Thermoanaerobacter tengcongensis).